A 367-amino-acid polypeptide reads, in one-letter code: Peptide chain release factor 2 (367 aa).

The residue at position 254 (Gln254) is an N5-methylglutamine.

The protein belongs to the prokaryotic/mitochondrial release factor family. Post-translationally, methylated by PrmC. Methylation increases the termination efficiency of RF2.

It localises to the cytoplasm. Its function is as follows. Peptide chain release factor 2 directs the termination of translation in response to the peptide chain termination codons UGA and UAA. This chain is Peptide chain release factor 2, found in Bordetella bronchiseptica (strain ATCC BAA-588 / NCTC 13252 / RB50) (Alcaligenes bronchisepticus).